The primary structure comprises 364 residues: Ribosomal RNA large subunit methyltransferase F (364 aa).

Residues 1 to 30 (MTNKRKSAKPLEPAKRAPKPRTKKSRDLSA) form a disordered region.

It belongs to the methyltransferase superfamily. METTL16/RlmF family.

It is found in the cytoplasm. It carries out the reaction adenosine(1618) in 23S rRNA + S-adenosyl-L-methionine = N(6)-methyladenosine(1618) in 23S rRNA + S-adenosyl-L-homocysteine + H(+). Functionally, specifically methylates the adenine in position 1618 of 23S rRNA. The chain is Ribosomal RNA large subunit methyltransferase F from Vibrio vulnificus (strain CMCP6).